Reading from the N-terminus, the 1440-residue chain is Glucose transporter type 1 (1440 aa).

A signal peptide spans 1–23; sequence MAFLCAPGLTFFLTYSIFSAVLG. Topologically, residues 24–67 are cytoplasmic; it reads MLQFGYNTGVINAPEKNIENFMKDVYKDRYGEDISEEFIQQLYS. A helical membrane pass occupies residues 68–88; sequence VAVSIFAIGGMLGGFSGGWMA. The Extracellular segment spans residues 89 to 95; it reads NRFGRKG. Residues 96–116 form a helical membrane-spanning segment; the sequence is GLLLNNVLGIAGACLMGFTKV. The Cytoplasmic segment spans residues 117-127; sequence SHSYEMLFLGR. The chain crosses the membrane as a helical span at residues 128 to 148; the sequence is FIIGVNCGLNTSLVPMYISEI. Residues 149-162 are Extracellular-facing; that stretch reads APLNLRGGLGTVNQ. Gln-162 contributes to the D-glucose binding site. Residues 163 to 183 traverse the membrane as a helical segment; it reads LAVTVGLLLSQVLGIEQILGT. The Cytoplasmic portion of the chain corresponds to 184–186; that stretch reads NEG. A helical transmembrane segment spans residues 187 to 207; the sequence is WPILLGLAICPAILQLILLPV. Residues 208–272 are Extracellular-facing; sequence CPESPRYLLI…LICSPTLRPP (65 aa). A helical membrane pass occupies residues 273–293; that stretch reads LIIGIVMQLSQQFSGINAVFY. D-glucose contacts are provided by residues 283–284 and Asn-289; that span reads QQ. Residues 294–310 are Cytoplasmic-facing; that stretch reads YSTSLFMSSGLTEESAK. A helical membrane pass occupies residues 311-331; that stretch reads FATIGIGAIMVVMTLVSIPLM. Residues 332-339 are Extracellular-facing; that stretch reads DRTGRRTL. Residues 340–360 traverse the membrane as a helical segment; that stretch reads HLYGLGGMFIFSIFITISFLI. Over 361 to 372 the chain is Cytoplasmic; sequence KEMIDWMSYLSV. The helical transmembrane segment at 373 to 393 threads the bilayer; the sequence is VATLGFVVFFAVGPGSIPWMI. Residue Trp-391 participates in D-glucose binding. Residues 394–405 lie on the Extracellular side of the membrane; the sequence is TAELFSQGPRPS. The helical transmembrane segment at 406-426 threads the bilayer; the sequence is AMAIAVLVNWMANFVVGIGFP. At 427–429 the chain is on the cytoplasmic side; that stretch reads SMK. The helical transmembrane segment at 430-450 threads the bilayer; it reads TALENYTFLPFSVFLAIFWIF. Residues 451 to 534 are Extracellular-facing; that stretch reads TYKKVPETKN…GPYPLSDSTN (84 aa). Asn-460 and Asn-480 each carry an N-linked (GlcNAc...) asparagine glycan. A helical membrane pass occupies residues 535–555; it reads LLGPGSSSYGPGGVLGLAGSG. The Cytoplasmic portion of the chain corresponds to 556–1440; that stretch reads SGLGGQCYTN…RKYTDFLRKK (885 aa). Disordered regions lie at residues 628–708, 725–808, 966–987, 1000–1083, 1304–1330, and 1380–1401; these read ERFL…SRYA, QANP…HSVM, APEG…SELP, FLAD…GSYH, LEGA…PLTH, and ANSP…GHHV. Polar residues predominate over residues 669–678; the sequence is PPDSASVRST. Positions 686 to 704 are enriched in low complexity; it reads QPQQVHHQQQQVHHQQQHQ. A compositionally biased stretch (pro residues) spans 730 to 739; that stretch reads QAPPQQPAPP. Over residues 754 to 789 the composition is skewed to basic residues; that stretch reads CQQRKHSHSPHHSRHTSPHSHHHHSHHSRHSRRSRR. Positions 1313–1330 are enriched in low complexity; it reads STTSEHSSSLPSPQPLTH.

This sequence belongs to the major facilitator superfamily. Sugar transporter (TC 2.A.1.1) family. Glucose transporter subfamily.

Its subcellular location is the membrane. In terms of biological role, facilitative glucose transporter. In Drosophila melanogaster (Fruit fly), this protein is Glucose transporter type 1 (Glut1).